Consider the following 717-residue polypeptide: Probable metal-nicotianamine transporter YSL12 (717 aa).

The interval 1-56 is disordered; it reads MASHANASGGGGDEEMVEASTLRHRHGAGKDANGVGTERQLAAAAAEGEEEGPSSV. 14 helical membrane-spanning segments follow: residues 76 to 96, 99 to 119, 144 to 164, 186 to 206, 248 to 268, 306 to 326, 351 to 371, 422 to 442, 450 to 470, 482 to 502, 536 to 556, 593 to 613, 636 to 656, and 671 to 691; these read AFVV…KLNL, GIIP…VRLW, CVVA…LFGM, IGWM…ALVP, LGKF…YTAG, IVNV…WPLI, VFIS…KVLI, VAFG…PQIF, ILVA…GAGL, LAIF…LVGL, FVSQ…VFWL, LPKH…AINL, FYIG…LFVW, and VASG…ILAL.

Belongs to the YSL (TC 2.A.67.2) family. As to expression, expressed in root cortex and stele.

It is found in the membrane. Its function is as follows. May be involved in the transport of nicotianamine-chelated metals. The sequence is that of Probable metal-nicotianamine transporter YSL12 (YSL12) from Oryza sativa subsp. japonica (Rice).